We begin with the raw amino-acid sequence, 475 residues long: Aspartyl/glutamyl-tRNA(Asn/Gln) amidotransferase subunit B (475 aa).

It belongs to the GatB/GatE family. GatB subfamily. In terms of assembly, heterotrimer of A, B and C subunits.

It catalyses the reaction L-glutamyl-tRNA(Gln) + L-glutamine + ATP + H2O = L-glutaminyl-tRNA(Gln) + L-glutamate + ADP + phosphate + H(+). The enzyme catalyses L-aspartyl-tRNA(Asn) + L-glutamine + ATP + H2O = L-asparaginyl-tRNA(Asn) + L-glutamate + ADP + phosphate + 2 H(+). Functionally, allows the formation of correctly charged Asn-tRNA(Asn) or Gln-tRNA(Gln) through the transamidation of misacylated Asp-tRNA(Asn) or Glu-tRNA(Gln) in organisms which lack either or both of asparaginyl-tRNA or glutaminyl-tRNA synthetases. The reaction takes place in the presence of glutamine and ATP through an activated phospho-Asp-tRNA(Asn) or phospho-Glu-tRNA(Gln). This Clostridium novyi (strain NT) protein is Aspartyl/glutamyl-tRNA(Asn/Gln) amidotransferase subunit B.